The sequence spans 207 residues: Outer-membrane lipoprotein LolB (207 aa).

The N-terminal stretch at 1–21 (MPIRKVSLLRLIPLASLVLAA) is a signal peptide. Cys-22 carries N-palmitoyl cysteine lipidation. A lipid anchor (S-diacylglycerol cysteine) is attached at Cys-22.

This sequence belongs to the LolB family. As to quaternary structure, monomer.

It is found in the cell outer membrane. Functionally, plays a critical role in the incorporation of lipoproteins in the outer membrane after they are released by the LolA protein. This chain is Outer-membrane lipoprotein LolB, found in Serratia proteamaculans (strain 568).